The primary structure comprises 698 residues: Capon-like protein (698 aa).

The 170-residue stretch at 25 to 194 folds into the PID domain; the sequence is FFHGITFQAK…SELLDVEQIS (170 aa). The tract at residues 191–240 is disordered; that stretch reads EQISEQQLSEDGERGGGDNETPKKEHLAITPDLNHTQPQRPNHLDIMPSH. Residues 201-217 are compositionally biased toward basic and acidic residues; the sequence is DGERGGGDNETPKKEHL. Coiled coils occupy residues 265–327, 379–484, and 554–583; these read RSEI…LASL, NQQL…LNAN, and LNEDIRLSIEQNLNNLEEQLKAAVSNGNLA. A compositionally biased stretch (low complexity) spans 396 to 423; that stretch reads SQHLQNLQQQQQQQQQQQQQQTQAAPTA. The tract at residues 396 to 460 is disordered; it reads SQHLQNLQQQ…QQQQQQQQDA (65 aa). Over residues 436–447 the composition is skewed to polar residues; the sequence is YPSMSALQSISN. Positions 448–458 are enriched in low complexity; sequence QLQQQQQQQQQ. Residues 588–698 form a disordered region; sequence GGSTSTRDTS…RTTWARHTTK (111 aa). The segment covering 590–640 has biased composition (low complexity); sequence STSTRDTSRSSSTLDSPSSPRLRSSNNNISPGSSNGNQNHNNNSNSNSSSS. 2 stretches are compositionally biased toward polar residues: residues 662 to 672 and 679 to 698; these read LSATPSFITRS and NRSQMMSQVQRTTWARHTTK.

In terms of tissue distribution, expressed at higher level in wing imaginal disk.

Putative adapter protein. This chain is Capon-like protein, found in Drosophila melanogaster (Fruit fly).